Here is a 446-residue protein sequence, read N- to C-terminus: Tubulin beta chain (446 aa).

Residues Gln11, Glu69, Ser138, Gly142, Thr143, Gly144, Asn204, and Asn226 each contribute to the GTP site. A Mg(2+)-binding site is contributed by Glu69. The segment at 425-446 is disordered; sequence YQEASISEGEEEYPEEVSNEEE. Over residues 432 to 446 the composition is skewed to acidic residues; it reads EGEEEYPEEVSNEEE.

Belongs to the tubulin family. Dimer of alpha and beta chains. A typical microtubule is a hollow water-filled tube with an outer diameter of 25 nm and an inner diameter of 15 nM. Alpha-beta heterodimers associate head-to-tail to form protofilaments running lengthwise along the microtubule wall with the beta-tubulin subunit facing the microtubule plus end conferring a structural polarity. Microtubules usually have 13 protofilaments but different protofilament numbers can be found in some organisms and specialized cells. The cofactor is Mg(2+).

The protein localises to the cytoplasm. It is found in the cytoskeleton. Its function is as follows. Tubulin is the major constituent of microtubules, a cylinder consisting of laterally associated linear protofilaments composed of alpha- and beta-tubulin heterodimers. Microtubules grow by the addition of GTP-tubulin dimers to the microtubule end, where a stabilizing cap forms. Below the cap, tubulin dimers are in GDP-bound state, owing to GTPase activity of alpha-tubulin. This chain is Tubulin beta chain (TUB2), found in Blumeria hordei (Barley powdery mildew).